The primary structure comprises 984 residues: MQEHLIVTLDGTDYLVEPGTSLLEFIKSRDTFVPSICYNESMGPIQTCDTCMVEIDGKIERACSTVVNRPMTVNTQNNDVKASQKEALDRILEKHMLYCTVCDYNNGDCEIHNAMDAWGLEEQSYEYKTKPYEKDYGPFYRYDPDQCILCGRCVEACQDIEVNETISIDWNREHPRVIWDNDVPINESSCVSCGQCATVCPCNAMMEVNMEGNAGYMTDTEPGSLAAMIDLTKKAEPGDGLLFAVSDSEAEMRKERIKKTKTVCTYCGVGCSFDVWTKDREVLKVQPSHDSPANKIATCVKGKFSWGHINSDQRLTKPLVRKDGEFHEVEWDEALDVIETNFKRIKNEYGGDHLAFIASSKGTNEESYLMQKLSRQVFGSNNVDNCSRYCQAPATKGLFRTVGHGGDSGSIEDLERAAMTVLIGTNTAEAHPVIASRMKRAQKLFGQKMHVFDIRKHEMAARADAFYQPKPGTDLVWLGAATKYIIDNDLHDKAFLNDWVDNYEDYYKSLELFTMDFAEETTGIPKEQIISFAEEAAKAESMSICWAMGVTQQDIGSDTSTAISNLLLVTGNYRKPGSGAYPLRGHNNVQGASDMGSMPDQFPGYQKVADDEVRAKFEKEYGVELNPTPGRDNHQMMEGIHNGDIQSLYLYGEDTGIVDSNINFVQSALEKVDFLVVQDEFLTFTATYADVVLPASPSLEKDGTFTNTERRIQRINKALQPLGDSKPDWEIFQLIAQRMGADWNYKHPSEIMDEIAGLTPSYSGVNYERLQGFNSLQWPVAPDGTDQPTLYMDGFNFENGRAKLFPLTFDNFFKEDEVYDLHVNNGRLLEHFHEGNMTYQTEMIKYKVPNAFVEISPELAKDRDIHEGAELRLISETGEATLIATVTDRVKGREIYIPLNNDAMSNGDLGAINKLTNSDVDKYTDTPSYKRTSCRMEVLTRKGKSPLNPTNFRVDKQRNPQYSVQVQKKWERPDYVFPGNVVDK.

Positions 3 to 79 (EHLIVTLDGT…PMTVNTQNND (77 aa)) constitute a 2Fe-2S ferredoxin-type domain. The [2Fe-2S] cluster site is built by C37, C48, C51, and C63. Residues 79 to 119 (DVKASQKEALDRILEKHMLYCTVCDYNNGDCEIHNAMDAWG) form the 4Fe-4S His(Cys)3-ligated-type domain. Residues H95, C99, C102, C109, C147, C150, C153, C157, C190, C193, C196, C200, C264, C267, C271, and C299 each coordinate [4Fe-4S] cluster. 2 consecutive 4Fe-4S ferredoxin-type domains span residues 138–165 (PFYR…VNET) and 181–211 (NDVP…VNME). Positions 252-984 (MRKERIKKTK…YVFPGNVVDK (733 aa)) are formate dehydrogenase. The 4Fe-4S Mo/W bis-MGD-type domain occupies 257–313 (IKKTKTVCTYCGVGCSFDVWTKDREVLKVQPSHDSPANKIATCVKGKFSWGHINSDQ).

This sequence in the C-terminal section; belongs to the prokaryotic molybdopterin-containing oxidoreductase family. The cofactor is [2Fe-2S] cluster. [4Fe-4S] cluster serves as cofactor. Mo-bis(molybdopterin guanine dinucleotide) is required as a cofactor.

The catalysed reaction is formate + NAD(+) = CO2 + NADH. The sequence is that of Putative formate dehydrogenase SH0748 from Staphylococcus haemolyticus (strain JCSC1435).